Reading from the N-terminus, the 492-residue chain is WD repeat-containing protein JIP5 (492 aa).

WD repeat units follow at residues 127–166, 178–217, 236–274, 276–317, and 365–405; these read RHKG…VVKK, KKND…LSNS, RSAY…ILIS, DQED…LEDQ, and RNHS…VEEN. Composition is skewed to acidic residues over residues 404–414 and 422–433; these read ENASVESDSDE and DLSDDTSSDDET. Residues 404 to 472 are disordered; sequence ENASVESDSD…SKSVKKRKIM (69 aa). A compositionally biased stretch (basic and acidic residues) spans 449 to 462; sequence KDLKEDHQEEKESN.

In terms of assembly, interacts with BUD27 and GIS1.

Its subcellular location is the nucleus. The protein localises to the nucleolus. This is WD repeat-containing protein JIP5 (JIP5) from Saccharomyces cerevisiae (strain ATCC 204508 / S288c) (Baker's yeast).